Here is a 220-residue protein sequence, read N- to C-terminus: ATP phosphoribosyltransferase (220 aa).

It belongs to the ATP phosphoribosyltransferase family. Short subfamily. As to quaternary structure, heteromultimer composed of HisG and HisZ subunits.

The protein localises to the cytoplasm. It carries out the reaction 1-(5-phospho-beta-D-ribosyl)-ATP + diphosphate = 5-phospho-alpha-D-ribose 1-diphosphate + ATP. It functions in the pathway amino-acid biosynthesis; L-histidine biosynthesis; L-histidine from 5-phospho-alpha-D-ribose 1-diphosphate: step 1/9. Its function is as follows. Catalyzes the condensation of ATP and 5-phosphoribose 1-diphosphate to form N'-(5'-phosphoribosyl)-ATP (PR-ATP). Has a crucial role in the pathway because the rate of histidine biosynthesis seems to be controlled primarily by regulation of HisG enzymatic activity. The protein is ATP phosphoribosyltransferase of Prochlorococcus marinus (strain NATL1A).